Here is a 225-residue protein sequence, read N- to C-terminus: ATP-dependent dethiobiotin synthetase BioD (225 aa).

Residue 12–17 coordinates ATP; sequence EVGKTY. Threonine 16 lines the Mg(2+) pocket. Lysine 37 is an active-site residue. A substrate-binding site is contributed by serine 41. ATP is bound by residues aspartate 52, 114-117, and 174-175; these read EGAG and NC. Residues aspartate 52 and glutamate 114 each coordinate Mg(2+).

This sequence belongs to the dethiobiotin synthetase family. As to quaternary structure, homodimer. Mg(2+) serves as cofactor.

It is found in the cytoplasm. It catalyses the reaction (7R,8S)-7,8-diammoniononanoate + CO2 + ATP = (4R,5S)-dethiobiotin + ADP + phosphate + 3 H(+). The protein operates within cofactor biosynthesis; biotin biosynthesis; biotin from 7,8-diaminononanoate: step 1/2. Its function is as follows. Catalyzes a mechanistically unusual reaction, the ATP-dependent insertion of CO2 between the N7 and N8 nitrogen atoms of 7,8-diaminopelargonic acid (DAPA, also called 7,8-diammoniononanoate) to form a ureido ring. This is ATP-dependent dethiobiotin synthetase BioD from Francisella tularensis subsp. novicida (strain U112).